Reading from the N-terminus, the 92-residue chain is Defensin (92 aa).

The first 20 residues, methionine 1 to alanine 20, serve as a signal peptide directing secretion. A propeptide spanning residues glutamine 21–arginine 52 is cleaved from the precursor. 3 disulfide bridges follow: cysteine 55–cysteine 82, cysteine 68–cysteine 88, and cysteine 72–cysteine 90.

This sequence belongs to the invertebrate defensin family. Type 1 subfamily. As to expression, hemolymph (at protein level).

It localises to the secreted. In terms of biological role, responsible for the anti Gram-positive activity of immune hemolymph. Expressed in the absence of immune challenge during metamorphosis. This is Defensin (Def) from Drosophila melanogaster (Fruit fly).